A 367-amino-acid polypeptide reads, in one-letter code: UDP-D-xylose:L-fucose alpha-1,3-D-xylosyltransferase (367 aa).

The span at 1–10 shows a compositional bias: polar residues; sequence MAQKQQTLHQ. The interval 1 to 21 is disordered; the sequence is MAQKQQTLHQQRPFSSSPRSY. The Cytoplasmic portion of the chain corresponds to 1-35; the sequence is MAQKQQTLHQQRPFSSSPRSYSSISNRPIFLLSRN. Residues 12–21 are compositionally biased toward low complexity; that stretch reads RPFSSSPRSY. A helical; Signal-anchor for type II membrane protein transmembrane segment spans residues 36–56; sequence GLLLVLLALFLLLGVFLPWPG. Residues 57-367 are Lumenal-facing; that stretch reads SPLLLFPNKV…ALESPLGKLQ (311 aa). Residues Asn85, Asn98, and Asn173 are each glycosylated (N-linked (GlcNAc...) asparagine). A DXD motif motif is present at residues 196–198; sequence DVD. N-linked (GlcNAc...) asparagine glycans are attached at residues Asn228 and Asn292.

The protein belongs to the glycosyltransferase 77 family. Mn(2+) serves as cofactor. It depends on Mg(2+) as a cofactor. Glycosylated. Expressed in roots, rosette leaves, stems and flowers.

The protein resides in the golgi apparatus membrane. In terms of biological role, catalyzes the transfer of D-xylose from UDP-alpha-D-xylose onto L-fucose. Probably involved in the biosynthesis of rhamnogalacturonan II (RG-II) through xylosylation of the internal fucose moiety of the A-chain of RG-II, a structurally complex pectic polysaccharide of the primary cell wall. RG-II is essential for the cell wall integrity of rapidly growing tissues such as roots and pollen tube growth and elongation. The sequence is that of UDP-D-xylose:L-fucose alpha-1,3-D-xylosyltransferase from Arabidopsis thaliana (Mouse-ear cress).